The primary structure comprises 403 residues: MRGQVGDLSPQQQEALARFRETLQDLLPTLPKADDYFLLRWLRARNFDLKKSEDMLRKHVEFRNQQNLDQILTWQAPEVIQLYDSGGLSGYDYEGCPVWFDIIGTMDPKGLFMSASKQDMIRKRIKVCEMLLHECELQSQKLGRKIERMVMVFDMEGLSLRHLWKPAVEVYQQFFAILEANYPETVKNLIIIRAPKLFPVAFNLVKSFMGEETQKKIVILGGNWKQELVKFVSPDQLPVEFGGTMTDPDGNPKCLTKINYGGEVPKRYYLSNQERPQYEHSVVVGRGSSHQVENEILFPGCVLRWQFASDGGDIGFGVFLKTRMGERQKAGEMVEVLPSQRYNAHMVPEDGSLNCLKAGVYVLRFDNTYSLLHTKKVGYTAEVLLPDKACEEKLQGLGSVSPP.

One can recognise a CRAL-TRIO domain in the interval 76–249 (APEVIQLYDS…EFGGTMTDPD (174 aa)). One can recognise a GOLD domain in the interval 275–383 (RPQYEHSVVV…TKKVGYTAEV (109 aa)).

Functionally, probable hydrophobic ligand-binding protein; may play a role in the transport of hydrophobic ligands like tocopherol, squalene and phospholipids. The sequence is that of SEC14-like protein 4 (Sec14l4) from Mus musculus (Mouse).